The primary structure comprises 197 residues: Probable chorismate pyruvate-lyase (197 aa).

Positions 66, 104, and 169 each coordinate substrate.

Belongs to the UbiC family.

The protein localises to the cytoplasm. It catalyses the reaction chorismate = 4-hydroxybenzoate + pyruvate. It participates in cofactor biosynthesis; ubiquinone biosynthesis. Its function is as follows. Removes the pyruvyl group from chorismate, with concomitant aromatization of the ring, to provide 4-hydroxybenzoate (4HB) for the ubiquinone pathway. The chain is Probable chorismate pyruvate-lyase from Albidiferax ferrireducens (strain ATCC BAA-621 / DSM 15236 / T118) (Rhodoferax ferrireducens).